We begin with the raw amino-acid sequence, 216 residues long: Pyrophosphatase PpaX (216 aa).

The Nucleophile role is filled by D9.

It belongs to the HAD-like hydrolase superfamily. PpaX family. Mg(2+) serves as cofactor.

The catalysed reaction is diphosphate + H2O = 2 phosphate + H(+). Its function is as follows. Hydrolyzes pyrophosphate formed during P-Ser-HPr dephosphorylation by HPrK/P. Might play a role in controlling the intracellular pyrophosphate pool. The polypeptide is Pyrophosphatase PpaX (Bacillus cereus (strain AH820)).